The sequence spans 129 residues: Follitropin subunit beta (129 aa).

The signal sequence occupies residues 1 to 18 (MKSVQFCFLFCCWRAICC). 6 disulfide bridges follow: Cys-21/Cys-69, Cys-35/Cys-84, Cys-38/Cys-122, Cys-46/Cys-100, Cys-50/Cys-102, and Cys-105/Cys-112. N-linked (GlcNAc...) asparagine glycosylation is found at Asn-25 and Asn-42.

Belongs to the glycoprotein hormones subunit beta family. As to quaternary structure, heterodimer. The active follitropin is a heterodimer composed of an alpha chain/CGA shared with other hormones and a unique beta chain/FSHB shown here.

The protein localises to the secreted. Its function is as follows. Together with the alpha chain CGA constitutes follitropin, the follicle-stimulating hormone, and provides its biological specificity to the hormone heterodimer. Binds FSHR, a G protein-coupled receptor, on target cells to activate downstream signaling pathways. Follitropin is involved in follicle development and spermatogenesis in reproductive organs. The chain is Follitropin subunit beta (FSHB) from Capra hircus (Goat).